The chain runs to 180 residues: Protein SPMIP9 (180 aa).

In terms of assembly, microtubule inner protein component of sperm flagellar doublet microtubules.

The protein localises to the nucleus. The protein resides in the cytoplasm. It is found in the cytoskeleton. It localises to the flagellum axoneme. Microtubule inner protein (MIP) part of the dynein-decorated doublet microtubules (DMTs) in flagella axoneme. This is Protein SPMIP9 (SPMIP9) from Bos taurus (Bovine).